A 136-amino-acid chain; its full sequence is Large ribosomal subunit protein bL17 (136 aa).

The protein belongs to the bacterial ribosomal protein bL17 family. Part of the 50S ribosomal subunit. Contacts protein L32.

The chain is Large ribosomal subunit protein bL17 from Rickettsia africae (strain ESF-5).